Here is a 472-residue protein sequence, read N- to C-terminus: MTVETFKPKQTTTLDTPAKTLEAASTNAVTTGNRIGFVSLGCPKNLVDSERILTQLRIDGYEVTNSYDNADLVIVNTCGFIDAAVEESLDAVREALEENGKVIVTGCLGAKENQIREVHPDVLEITGPHSYEAVLKHVHKYVPKPEHNPFTSLIPQTGVKLTPKHYAYLKISEGCDNRCTFCIIPSLRGDLDSRPAGSILDEAKRLVESGVQEILVVSQDTSAYGKDKGGRTDFWDGMPVKQDITSLARQLGKMGAWVRLHYIYPYPWVDDLIPLMAEGLILPYLDIPMQHASPRILKMMKRPGRVDRQLEAIQRWREICPDLVIRSTFIVGFPGETEEDFQILLDFLKEARLDRVGCFKYSEVDGAVANTIAELISEEVKEDRYHRFMELQAEISAERLARFVGRTLDILIDDVDEEGAIGRSFADAPEIDGMVFINGETELEPGMLVRARITHSDEHDLWAEVVDADTQD.

Residues 33–143 form the MTTase N-terminal domain; the sequence is NRIGFVSLGC…VLKHVHKYVP (111 aa). [4Fe-4S] cluster-binding residues include C42, C78, C107, C175, C179, and C182. One can recognise a Radical SAM core domain in the interval 161–398; sequence LTPKHYAYLK…MELQAEISAE (238 aa). In terms of domain architecture, TRAM spans 401–467; that stretch reads ARFVGRTLDI…EHDLWAEVVD (67 aa).

The protein belongs to the methylthiotransferase family. RimO subfamily. It depends on [4Fe-4S] cluster as a cofactor.

The protein localises to the cytoplasm. It carries out the reaction L-aspartate(89)-[ribosomal protein uS12]-hydrogen + (sulfur carrier)-SH + AH2 + 2 S-adenosyl-L-methionine = 3-methylsulfanyl-L-aspartate(89)-[ribosomal protein uS12]-hydrogen + (sulfur carrier)-H + 5'-deoxyadenosine + L-methionine + A + S-adenosyl-L-homocysteine + 2 H(+). Its function is as follows. Catalyzes the methylthiolation of an aspartic acid residue of ribosomal protein uS12. This chain is Ribosomal protein uS12 methylthiotransferase RimO, found in Shewanella sp. (strain W3-18-1).